A 99-amino-acid polypeptide reads, in one-letter code: MAAAAASRGVGAKLGLREIRIHLCQRSPGSQGVRDFIEKRYVELKKANPDLPILIRECSDVQPKLWARYAFGQETNVPLNNFSADQVTRALENVLSGKA.

N-acetylalanine is present on Ala2. A disulfide bridge links Cys24 with Cys58. The residue at position 64 (Lys64) is an N6-acetyllysine; alternate. Lys64 carries the post-translational modification N6-succinyllysine; alternate.

The protein belongs to the complex I NDUFA2 subunit family. In terms of assembly, complex I is composed of 45 different subunits.

The protein resides in the mitochondrion inner membrane. Functionally, accessory subunit of the mitochondrial membrane respiratory chain NADH dehydrogenase (Complex I), that is believed not to be involved in catalysis. Complex I functions in the transfer of electrons from NADH to the respiratory chain. The immediate electron acceptor for the enzyme is believed to be ubiquinone. This Homo sapiens (Human) protein is NADH dehydrogenase [ubiquinone] 1 alpha subcomplex subunit 2 (NDUFA2).